The chain runs to 170 residues: uncharacterized protein (170 aa).

This is an uncharacterized protein from Saccharomyces cerevisiae (strain ATCC 204508 / S288c) (Baker's yeast).